A 412-amino-acid chain; its full sequence is Putative competence-damage inducible protein (412 aa).

This sequence belongs to the CinA family.

The chain is Putative competence-damage inducible protein from Caldanaerobacter subterraneus subsp. tengcongensis (strain DSM 15242 / JCM 11007 / NBRC 100824 / MB4) (Thermoanaerobacter tengcongensis).